A 154-amino-acid chain; its full sequence is OCIA domain-containing protein 2 (154 aa).

Residues Met1 to Gln22 form a disordered region. The 120-residue stretch at Met1–Ala120 folds into the OCIA domain. The residue at position 41 (Lys41) is an N6-acetyllysine.

In terms of assembly, interacts (via OCIA domain) with OCIAD1/ASRIJ and STAT3.

The protein localises to the endosome. Its subcellular location is the mitochondrion. The protein resides in the mitochondrion inner membrane. Has an essential role in the assembly of mitochondrial respiratory chain complex III. Is also required for STAT3 activation and plays a role in cell migration. This Homo sapiens (Human) protein is OCIA domain-containing protein 2 (OCIAD2).